The primary structure comprises 343 residues: S-adenosylmethionine:tRNA ribosyltransferase-isomerase (343 aa).

This sequence belongs to the QueA family. As to quaternary structure, monomer.

It localises to the cytoplasm. It catalyses the reaction 7-aminomethyl-7-carbaguanosine(34) in tRNA + S-adenosyl-L-methionine = epoxyqueuosine(34) in tRNA + adenine + L-methionine + 2 H(+). The protein operates within tRNA modification; tRNA-queuosine biosynthesis. In terms of biological role, transfers and isomerizes the ribose moiety from AdoMet to the 7-aminomethyl group of 7-deazaguanine (preQ1-tRNA) to give epoxyqueuosine (oQ-tRNA). In Dehalococcoides mccartyi (strain CBDB1), this protein is S-adenosylmethionine:tRNA ribosyltransferase-isomerase.